The chain runs to 395 residues: uncharacterized protein (395 aa).

An N-terminal signal peptide occupies residues 1-18 (MKHVIMLYFIAAATLFSS). Cys-19 is lipidated: N-palmitoyl cysteine. A lipid anchor (S-diacylglycerol cysteine) is attached at Cys-19.

Its subcellular location is the cell outer membrane. May be involved in ulvan degradation. Ulvan is the main polysaccharide component of the Ulvales (green seaweed) cell wall. It is composed of disaccharide building blocks comprising 3-sulfated rhamnose (Rha3S) linked to D-glucuronic acid (GlcA), L-iduronic acid (IduA), or D-xylose (Xyl). This is an uncharacterized protein from Formosa agariphila (strain DSM 15362 / KCTC 12365 / LMG 23005 / KMM 3901 / M-2Alg 35-1).